Consider the following 144-residue polypeptide: Probable DNA-directed RNA polymerases I and III subunit RPAC2 (144 aa).

Positions 14–47 (KVEAETMEVDEQPQETPQVDDEEDLNVPSKKKME) are disordered. Residues 18 to 38 (ETMEVDEQPQETPQVDDEEDL) show a composition bias toward acidic residues.

This sequence belongs to the archaeal Rpo11/eukaryotic RPB11/RPC19 RNA polymerase subunit family. In terms of assembly, component of the RNA polymerase I (Pol I) and RNA polymerase III (Pol III) complexes consisting of at least 13 and 17 subunits, respectively.

Its subcellular location is the nucleus. In terms of biological role, DNA-dependent RNA polymerase catalyzes the transcription of DNA into RNA using the four ribonucleoside triphosphates as substrates. Common core component of RNA polymerases I and III which synthesize ribosomal RNA precursors and small RNAs, such as 5S rRNA and tRNAs, respectively. This is Probable DNA-directed RNA polymerases I and III subunit RPAC2 (rpac-19) from Caenorhabditis elegans.